A 259-amino-acid chain; its full sequence is L-ornithine N(alpha)-acyltransferase (259 aa).

This sequence belongs to the acetyltransferase family. OlsB subfamily.

It catalyses the reaction a (3R)-hydroxyacyl-[ACP] + L-ornithine = a lyso-ornithine lipid + holo-[ACP] + H(+). It participates in lipid metabolism. Functionally, catalyzes the first step in the biosynthesis of ornithine lipids, which are phosphorus-free membrane lipids. Catalyzes the 3-hydroxyacyl-acyl carrier protein-dependent acylation of ornithine to form lyso-ornithine lipid (LOL). This chain is L-ornithine N(alpha)-acyltransferase, found in Rhodobacter capsulatus (strain ATCC BAA-309 / NBRC 16581 / SB1003).